The sequence spans 158 residues: Small ribosomal subunit protein uS9 (158 aa).

Belongs to the universal ribosomal protein uS9 family.

In Nitrobacter hamburgensis (strain DSM 10229 / NCIMB 13809 / X14), this protein is Small ribosomal subunit protein uS9.